Reading from the N-terminus, the 372-residue chain is Integral membrane protein GPR137B (372 aa).

The Lumenal portion of the chain corresponds to 1–32 (MESPAWDATKNDSLPPTLTPAVPPYVKLGLTT). N11 carries N-linked (GlcNAc...) asparagine glycosylation. A helical membrane pass occupies residues 33–53 (VYTIFYLLLFAFVYVQLWLVL). Residues 54–64 (HYKHKRFSYQT) are Cytoplasmic-facing. Residues 65–85 (VFLFLCLLWASLRAVLFSFYF) traverse the membrane as a helical segment. Over 86 to 93 (RNFVEANR) the chain is Lumenal. The chain crosses the membrane as a helical span at residues 94 to 114 (LGAFTFWLLYCFPVCLQFFTL). Topologically, residues 115–144 (TLMNLYFARVIYKAKSKYLPELIKYRLPLY) are cytoplasmic. Residues 145–165 (LAFLVISLLFLVVNLTCAILV) traverse the membrane as a helical segment. The Lumenal segment spans residues 166–173 (KTDYAETK). Residues 174 to 194 (VIVSIRVAINDTLFVLCAVSL) form a helical membrane-spanning segment. Over 195–222 (SVCLYKISKMSLAGVYLESKGSSVCQVT) the chain is Cytoplasmic. A helical transmembrane segment spans residues 223–243 (CIGVTVILLYTSRACYNLVVL). Topologically, residues 244–276 (SLSDSRYSSFDYDWYNVSDQADLKCKLGDAGYV) are lumenal. N-linked (GlcNAc...) asparagine glycosylation is present at N259. A helical transmembrane segment spans residues 277-297 (VFGIILFIWELFPTSLVVYFF). The Cytoplasmic portion of the chain corresponds to 298-372 (RVRNSAQDMT…QTGSLQRDST (75 aa)).

This sequence belongs to the GPR137 family.

The protein localises to the lysosome membrane. In terms of biological role, lysosomal integral membrane protein that regulates the localization and activity of mTORC1, a signaling complex promoting cell growth in response to growth factors, energy levels, and amino acids. Interacts with Rag GTPases and increases the lysosomial localization and activity of Rag GTPases and thereby regulates mTORC1 translocation and activity in lysosome. Involved in the regulation of lysosomal morphology and autophagy. Also acts as a negative regulator of osteoclast activity. Functionally, also acts as a negative regulator of osteoclast activity. In Xenopus laevis (African clawed frog), this protein is Integral membrane protein GPR137B (gpr137b).